The primary structure comprises 428 residues: Tyrosine--tRNA ligase (428 aa).

Tyrosine 36 lines the L-tyrosine pocket. Residues 41-50 (PTAPSLHAGH) carry the 'HIGH' region motif. Residues tyrosine 171 and glutamine 175 each contribute to the L-tyrosine site. Residues 231–235 (KFGKS) carry the 'KMSKS' region motif. Lysine 234 lines the ATP pocket. The 58-residue stretch at 359–416 (DSIVDLLVETGLAASKGAARRNVAEGGVYVNNIRIESDEWIPQHSDFLHERWLVLRRG) folds into the S4 RNA-binding domain.

This sequence belongs to the class-I aminoacyl-tRNA synthetase family. TyrS type 1 subfamily. As to quaternary structure, homodimer.

Its subcellular location is the cytoplasm. The enzyme catalyses tRNA(Tyr) + L-tyrosine + ATP = L-tyrosyl-tRNA(Tyr) + AMP + diphosphate + H(+). Its function is as follows. Catalyzes the attachment of tyrosine to tRNA(Tyr) in a two-step reaction: tyrosine is first activated by ATP to form Tyr-AMP and then transferred to the acceptor end of tRNA(Tyr). This Mycolicibacterium fortuitum (Mycobacterium fortuitum) protein is Tyrosine--tRNA ligase.